The primary structure comprises 86 residues: Acyl carrier protein (86 aa).

Positions Ala-2–Gly-82 constitute a Carrier domain. The residue at position 37 (Ser-37) is an O-(pantetheine 4'-phosphoryl)serine.

The protein belongs to the acyl carrier protein (ACP) family. 4'-phosphopantetheine is transferred from CoA to a specific serine of apo-ACP by AcpS. This modification is essential for activity because fatty acids are bound in thioester linkage to the sulfhydryl of the prosthetic group.

It is found in the cytoplasm. It participates in lipid metabolism; fatty acid biosynthesis. Its function is as follows. Carrier of the growing fatty acid chain in fatty acid biosynthesis. This Dehalococcoides mccartyi (strain ATCC BAA-2266 / KCTC 15142 / 195) (Dehalococcoides ethenogenes (strain 195)) protein is Acyl carrier protein.